The sequence spans 184 residues: MADEQLDEKNLNSEEAGAVNGDARVQELEEQLAAAKDQSLRAAADLQNIRRRAEQDVEKAHKFALEKFAGDLLPIIDSLERGLELSNADDDTIKPMREGIELTLKMFHDTLKRYNLEALEPHGEPFNAEHHQAMAMQESADVEPNSVLKVFQKGYLLNGRLLRPAMVVVSKSPAPAQPSIDEKA.

Positions 1-24 are disordered; it reads MADEQLDEKNLNSEEAGAVNGDAR.

It belongs to the GrpE family. In terms of assembly, homodimer.

It is found in the cytoplasm. Participates actively in the response to hyperosmotic and heat shock by preventing the aggregation of stress-denatured proteins, in association with DnaK and GrpE. It is the nucleotide exchange factor for DnaK and may function as a thermosensor. Unfolded proteins bind initially to DnaJ; upon interaction with the DnaJ-bound protein, DnaK hydrolyzes its bound ATP, resulting in the formation of a stable complex. GrpE releases ADP from DnaK; ATP binding to DnaK triggers the release of the substrate protein, thus completing the reaction cycle. Several rounds of ATP-dependent interactions between DnaJ, DnaK and GrpE are required for fully efficient folding. In Pseudomonas entomophila (strain L48), this protein is Protein GrpE.